A 411-amino-acid polypeptide reads, in one-letter code: Adenylosuccinate synthetase (411 aa).

GTP contacts are provided by residues 11-17 and 39-41; these read GDEGKGK and GHT. D12 functions as the Proton acceptor in the catalytic mechanism. Mg(2+) is bound by residues D12 and G39. IMP is bound by residues 12–15, 37–40, T121, R135, Q215, T230, and R294; these read DEGK and NAGH. The Proton donor role is filled by H40. 290–296 lines the substrate pocket; it reads TTTKRPR. Residues R296, 322–324, and 400–402 each bind GTP; these read KLD and STS.

It belongs to the adenylosuccinate synthetase family. Homodimer. The cofactor is Mg(2+).

Its subcellular location is the cytoplasm. It catalyses the reaction IMP + L-aspartate + GTP = N(6)-(1,2-dicarboxyethyl)-AMP + GDP + phosphate + 2 H(+). Its pathway is purine metabolism; AMP biosynthesis via de novo pathway; AMP from IMP: step 1/2. Functionally, plays an important role in the de novo pathway of purine nucleotide biosynthesis. Catalyzes the first committed step in the biosynthesis of AMP from IMP. The chain is Adenylosuccinate synthetase from Helicobacter pylori (strain J99 / ATCC 700824) (Campylobacter pylori J99).